The following is a 91-amino-acid chain: DNA-directed RNA polymerase subunit omega (91 aa).

This sequence belongs to the RNA polymerase subunit omega family. As to quaternary structure, the RNAP catalytic core consists of 2 alpha, 1 beta, 1 beta' and 1 omega subunit. When a sigma factor is associated with the core the holoenzyme is formed, which can initiate transcription.

It carries out the reaction RNA(n) + a ribonucleoside 5'-triphosphate = RNA(n+1) + diphosphate. In terms of biological role, promotes RNA polymerase assembly. Latches the N- and C-terminal regions of the beta' subunit thereby facilitating its interaction with the beta and alpha subunits. The polypeptide is DNA-directed RNA polymerase subunit omega (Proteus mirabilis (strain HI4320)).